The primary structure comprises 203 residues: MPEIVLVGRSNVGKSSLIRAITRGAADVRVGKRPGVTRKPVFHELDGELVLVDMPGFGFMSGVPRRYQERVKDLIVRYLEEKDNILFAIHVVDAKALPEIAERWERRGEIPIDREMFQFLNEVGLDPIVAANKIDKIKPIEFEEHMDAVAEALGLFPPWRQWLDTLFPISAKTGEGLVEFLEALQERVRKAGYPEFARFFRTK.

The EngB-type G domain occupies 1–190; sequence MPEIVLVGRS…LEALQERVRK (190 aa). GTP is bound by residues 8–15, 35–39, 53–56, 132–135, and 169–171; these read GRSNVGKS, GVTRK, DMPG, NKID, and ISA. Mg(2+) is bound by residues Ser-15 and Thr-37.

The protein belongs to the TRAFAC class TrmE-Era-EngA-EngB-Septin-like GTPase superfamily. EngB GTPase family. Mg(2+) serves as cofactor.

Functionally, necessary for normal cell division and for the maintenance of normal septation. In Methanopyrus kandleri (strain AV19 / DSM 6324 / JCM 9639 / NBRC 100938), this protein is Probable GTP-binding protein EngB.